Here is a 394-residue protein sequence, read N- to C-terminus: Ribulose bisphosphate carboxylase large chain (394 aa).

The residue at position 5 (Lys5) is an N6,N6,N6-trimethyllysine. Substrate-binding residues include Asn114 and Thr164. The active-site Proton acceptor is the Lys166. Lys168 serves as a coordination point for substrate. Mg(2+)-binding residues include Lys192, Asp194, and Glu195. An N6-carboxylysine modification is found at Lys192. The active-site Proton acceptor is the His285. Substrate contacts are provided by Arg286, His318, and Ser370.

It belongs to the RuBisCO large chain family. Type I subfamily. Heterohexadecamer of 8 large chains and 8 small chains. Mg(2+) is required as a cofactor.

It is found in the plastid. The protein resides in the chloroplast. It carries out the reaction 2 (2R)-3-phosphoglycerate + 2 H(+) = D-ribulose 1,5-bisphosphate + CO2 + H2O. The enzyme catalyses D-ribulose 1,5-bisphosphate + O2 = 2-phosphoglycolate + (2R)-3-phosphoglycerate + 2 H(+). Functionally, ruBisCO catalyzes two reactions: the carboxylation of D-ribulose 1,5-bisphosphate, the primary event in carbon dioxide fixation, as well as the oxidative fragmentation of the pentose substrate in the photorespiration process. Both reactions occur simultaneously and in competition at the same active site. The chain is Ribulose bisphosphate carboxylase large chain (rbcL) from Victoria cruziana (Santa Cruz water lily).